The chain runs to 290 residues: 4-diphosphocytidyl-2-C-methyl-D-erythritol kinase (290 aa).

Residue Lys-20 is part of the active site. 104–114 provides a ligand contact to ATP; the sequence is PMGGGLGGGSS. The active site involves Asp-146.

The protein belongs to the GHMP kinase family. IspE subfamily.

It catalyses the reaction 4-CDP-2-C-methyl-D-erythritol + ATP = 4-CDP-2-C-methyl-D-erythritol 2-phosphate + ADP + H(+). Its pathway is isoprenoid biosynthesis; isopentenyl diphosphate biosynthesis via DXP pathway; isopentenyl diphosphate from 1-deoxy-D-xylulose 5-phosphate: step 3/6. Its function is as follows. Catalyzes the phosphorylation of the position 2 hydroxy group of 4-diphosphocytidyl-2C-methyl-D-erythritol. The sequence is that of 4-diphosphocytidyl-2-C-methyl-D-erythritol kinase from Shewanella frigidimarina (strain NCIMB 400).